We begin with the raw amino-acid sequence, 1580 residues long: MLTSWAPGLWVLGLWATFSHGTNIGERCPTSQQEGLKLEHSSDPSTNVTGFNLIRRLNLMKTSAIKKIRNPKGPLILRLGAAPVTQPTRRVFPRGLPEEFALVLTVLLKKHTFRNTWYLFQVTDANGYPQISLEVNSQERSLELRAQGQDGDFVSCIFPVPQLFDLRWHKLMLSVAGRVASVHVDCVSASSQPLGPRQSIRPGGHVFLGLDAEQGKPVSFDLQQAHIYCDPELVLEEGCCEILPGGCPPETSKSRRDTQSNELIEINPQTEGKVYTRCFCLEEPQNSKVDAQLMGRNIQKAERGTKVHQGTGVNECPPCAHSARESNVTLGPSGLKGGKGERGLTGPSGPKGEKGARGNDCVRVSPDAPLQCVEGPKGEKGESGDLGPPGLPGPTGQKGQKGEKGDGGLKGLPGKPGRDGRPGEICVIGPKGQKGDPGFVGPEGLAGEPGPPGLPGPPGIGLPGTPGDPGGPPGPKGEKGSSGIPGKEGPGGKPGKPGVPGTKGEKGDPCEVCPTLPEGSQNFVGLPGKPGPKGEPGDPAPAWEGLGTVGLKGDRGDPGIQGMKGEKGEPCSSCSSGVGAQHLGPSPGHGLPGLPGTSGIPGPRGLKGEKGSFGDTGPAGVPGSPGPVGPAGIKGAKGEPCEPCTALSELQDGDMRVVHLPGPAGEKGEPGSPGFGLPGKQGKAGERGLKGQKGDAGNPGDPGTPGITGQPGISGEPGIRGPAGPKGEKGDGCTACPSLQGALTDVSGLPGKPGPKGEPGPEGVGHPGKPGQPGLPGVQGPPGPKGTQGEPGPPGTGAEGPQGEPGTQGLPGTQGLPGPRGPPGSAGEKGAQGSPGPKGAIGPMGPPGAGVSGPPGQKGSRGEKGEPGECSCPSRGEPIFSGMPGAPGLWMGSSSQPGPQGPPGVPGPPGPPGMPGLQGVPGHNGLPGQPGLTAELGSLPIEKHLLKSICGDCAQGQTAHPAFLLEKGEKGDQGIPGVPGFDNCARCFIERERPRAEEARGDNSEGEPGCSGSPGLPGPPGMPGQRGEEGPPGMRGSPGPPGPIGLQGERGLTGLTGDKGEPGPPGQPGYPGAMGPPGLPGIKGERGYTGPSGEKGESGPPGSEGLPGPQGPAGPRGERGPQGSSGEKGDQGFQGQPGFPGPPGPPGFPGKAGAPGPPGPQAEKGSEGIRGPSGLPGSPGPPGPPGIQGPAGLDGLDGKDGKPGLRGDPGPAGPPGLMGPPGFKGKTGHPGLPGPKGDCGKPGPPGSSGRPGAEGEPGAMGPQGRPGPPGHLGPPGQPGPPGLSTVGLKGDRGVPGERGLAGLPGQPGTPGHPGPPGEPGSDGAAGKEGPPGKQGLYGPPGPKGDPGPAGQKGQAGEKGRSGMPGGPGKSGSMGPIGPPGPAGERGHPGSPGPAGNPGLPGLPGSMGDMVNYDDIKRFIRQEIIKLFDERMAYYTSRMQFPMEVAAAPGRPGPPGKDGAPGRPGAPGSPGLPGQIGREGRQGLPGMRGLPGTKGEKGDIGVGIAGENGLPGPPGPQGPPGYGKMGATGPMGQQGIPGIPGPPGPMGQPGKAGHCNPSDCFGAMPMEQQYPPMKSMKGPFG.

Residues 1-21 form the signal peptide; the sequence is MLTSWAPGLWVLGLWATFSHG. An N-linked (GlcNAc...) asparagine glycan is attached at Asn-47. In terms of domain architecture, Laminin G-like spans 50 to 231; that stretch reads GFNLIRRLNL…LQQAHIYCDP (182 aa). The nonhelical region 10 (NC10) stretch occupies residues 232–374; the sequence is ELVLEEGCCE…SPDAPLQCVE (143 aa). The segment at 324–547 is disordered; it reads RESNVTLGPS…DPAPAWEGLG (224 aa). Residue Asn-327 is glycosylated (N-linked (GlcNAc...) asparagine). The Collagen-like 1 domain maps to 375–424; the sequence is GPKGEKGESGDLGPPGLPGPTGQKGQKGEKGDGGLKGLPGKPGRDGRPGE. Residues 375-509 form a triple-helical region 9 (COL9) with 3 imperfections region; that stretch reads GPKGEKGESG…PGTKGEKGDP (135 aa). Residues 449-460 show a composition bias toward pro residues; that stretch reads PGPPGLPGPPGI. Gly residues predominate over residues 486–495; the sequence is GKEGPGGKPG. The segment at 510-524 is nonhelical region 9 (NC9); that stretch reads CEVCPTLPEGSQNFV. The tract at residues 525-570 is triple-helical region 8 (COL8) with 1 imperfection; it reads GLPGKPGPKGEPGDPAPAWEGLGTVGLKGDRGDPGIQGMKGEKGEP. The short motif at 555–557 is the Cell attachment site element; it reads RGD. Residues 571-586 are nonhelical region 8 (NC8); sequence CSSCSSGVGAQHLGPS. Over residues 585–598 the composition is skewed to low complexity; the sequence is PSPGHGLPGLPGTS. The interval 585 to 935 is disordered; sequence PSPGHGLPGL…LPGQPGLTAE (351 aa). A triple-helical region 7 (COL7) with 1 imperfection region spans residues 587–640; it reads PGHGLPGLPGTSGIPGPRGLKGEKGSFGDTGPAGVPGSPGPVGPAGIKGAKGEP. Collagen-like domains are found at residues 590 to 643 and 676 to 725; these read GLPG…PCEP and GLPG…PAGP. A nonhelical region 7 (NC7) region spans residues 641–661; that stretch reads CEPCTALSELQDGDMRVVHLP. Positions 662–732 are triple-helical region 6 (COL6) with 1 imperfection; it reads GPAGEKGEPG…AGPKGEKGDG (71 aa). Residues 683–693 show a composition bias toward basic and acidic residues; sequence KAGERGLKGQK. Low complexity predominate over residues 698–714; the sequence is NPGDPGTPGITGQPGIS. The nonhelical region 6 (NC6) stretch occupies residues 733–747; sequence CTACPSLQGALTDVS. Positions 748 to 870 are triple-helical region 5 (COL5) with 3 imperfections; sequence GLPGKPGPKG…RGEKGEPGEC (123 aa). The 52-residue stretch at 797–848 folds into the Collagen-like 4 domain; that stretch reads GAEGPQGEPGTQGLPGTQGLPGPRGPPGSAGEKGAQGSPGPKGAIGPMGPPG. Residues 801-817 show a composition bias toward low complexity; the sequence is PQGEPGTQGLPGTQGLP. The interval 871 to 881 is nonhelical region 5 (NC5); sequence SCPSRGEPIFS. The interval 882–933 is triple-helical region 4 (COL4) with 2 imperfections; it reads GMPGAPGLWMGSSSQPGPQGPPGVPGPPGPPGMPGLQGVPGHNGLPGQPGLT. The span at 899–914 shows a compositional bias: pro residues; sequence PQGPPGVPGPPGPPGM. The nonhelical region 4 (NC4) stretch occupies residues 934-967; the sequence is AELGSLPIEKHLLKSICGDCAQGQTAHPAFLLEK. The triple-helical region 3 (COL3) stretch occupies residues 968-982; sequence GEKGDQGIPGVPGFD. Positions 983–1005 are nonhelical region 3 (NC3); that stretch reads NCARCFIERERPRAEEARGDNSE. 2 disordered regions span residues 995-1405 and 1445-1523; these read RAEE…LPGS and AAAP…GYGK. The Cell attachment site motif lies at 1000 to 1002; that stretch reads RGD. One can recognise a Collagen-like 5 domain in the interval 1006–1063; the sequence is GEPGCSGSPGLPGPPGMPGQRGEEGPPGMRGSPGPPGPIGLQGERGLTGLTGDKGEPG. The tract at residues 1006 to 1409 is triple-helical region 2 (COL2) with 2 imperfections; sequence GEPGCSGSPG…PGLPGSMGDM (404 aa). Residues 1098-1107 show a composition bias toward low complexity; the sequence is SGPPGSEGLP. Composition is skewed to pro residues over residues 1139-1148 and 1178-1187; these read FPGPPGPPGF and SPGPPGPPGI. A compositionally biased stretch (basic and acidic residues) spans 1196-1205; that stretch reads LDGKDGKPGL. The Cell attachment site signature appears at 1206 to 1208; sequence RGD. Positions 1210-1263 constitute a Collagen-like 6 domain; the sequence is GPAGPPGLMGPPGFKGKTGHPGLPGPKGDCGKPGPPGSSGRPGAEGEPGAMGPQ. A compositionally biased stretch (low complexity) spans 1247-1263; the sequence is SSGRPGAEGEPGAMGPQ. Residues 1265–1281 show a composition bias toward pro residues; it reads RPGPPGHLGPPGQPGPP. Collagen-like domains follow at residues 1350-1407, 1448-1500, and 1504-1552; these read GQKG…GSMG, PGRP…GDIG, and AGEN…GKAG. Positions 1362–1371 are enriched in gly residues; it reads GMPGGPGKSG. Residues 1396–1405 are compositionally biased toward low complexity; that stretch reads NPGLPGLPGS. The segment at 1410–1448 is nonhelical region 2 (NC2); sequence VNYDDIKRFIRQEIIKLFDERMAYYTSRMQFPMEVAAAP. The triple-helical region 1 (COL1) with 2 imperfections stretch occupies residues 1449 to 1554; it reads GRPGPPGKDG…MGQPGKAGHC (106 aa). The interval 1555 to 1580 is nonhelical region 1 (NC1); it reads NPSDCFGAMPMEQQYPPMKSMKGPFG.

This sequence belongs to the fibril-associated collagens with interrupted helices (FACIT) family. Homotrimer. Interacts with FBN1, fibronectin and integrins ITGA1/ITGB1 and ITGA2/ITGB1. Integrin ITGA1/ITGB1 binds to a unique site within COL16A1 located close to its C-terminal end between collagenous domains COL1-COL3. Post-translationally, prolines at the third position of the tripeptide repeating unit (G-X-Y) are hydroxylated in some or all of the chains. In terms of processing, glycosylated. In terms of tissue distribution, expressed in most tissues examined with highest levels of expression observed in heart. Strongly expressed in cortical and medullar regions of kidney and more weakly expressed in lung. Also detected in the ciliary muscle of the eye, on the serosa layer lining the muscularis externa of intestinal tissue, and in the perimysium membrane lining both the cardiac muscle bundle and the smooth muscle tissue of the small intestine. Strongly stained in particulate or granular structures. Not detected in brain or skeletal muscle.

It localises to the secreted. It is found in the extracellular space. Its subcellular location is the extracellular matrix. Its function is as follows. Involved in mediating cell attachment and inducing integrin-mediated cellular reactions, such as cell spreading and alterations in cell morphology. The polypeptide is Collagen alpha-1(XVI) chain (Mus musculus (Mouse)).